The chain runs to 257 residues: Ig delta chain C region secreted form (257 aa).

Residues Pro-5 to Thr-105 enclose the Ig-like 1 domain. Cys-26 and Cys-78 are joined by a disulfide. 2 N-linked (GlcNAc...) asparagine glycosylation sites follow: Asn-58 and Asn-75. Residues Pro-89–Lys-111 form a disordered region. Residues Trp-96–Lys-111 show a composition bias toward polar residues. N-linked (GlcNAc...) asparagine glycans are attached at residues Asn-112, Asn-135, and Asn-227. Residues Pro-133–Ala-233 enclose the Ig-like 2 domain.

As to expression, cell lines producing IgD contain several mRNA species for Ig delta chains. In plasmacytomas, the secreted form is the major component, and the membrane-bound form is a minor component. In spleen, however, the membrane-bound form is the major component. These two forms differ in their C-terminal segments.

It is found in the secreted. This chain is Ig delta chain C region secreted form, found in Mus musculus (Mouse).